The chain runs to 210 residues: FMN-dependent NADH:quinone oxidoreductase (210 aa).

FMN is bound by residues Ser9 and 15–17; that span reads SHS.

It belongs to the azoreductase type 1 family. In terms of assembly, homodimer. FMN is required as a cofactor.

It catalyses the reaction 2 a quinone + NADH + H(+) = 2 a 1,4-benzosemiquinone + NAD(+). It carries out the reaction N,N-dimethyl-1,4-phenylenediamine + anthranilate + 2 NAD(+) = 2-(4-dimethylaminophenyl)diazenylbenzoate + 2 NADH + 2 H(+). In terms of biological role, quinone reductase that provides resistance to thiol-specific stress caused by electrophilic quinones. Also exhibits azoreductase activity. Catalyzes the reductive cleavage of the azo bond in aromatic azo compounds to the corresponding amines. This Mesorhizobium japonicum (strain LMG 29417 / CECT 9101 / MAFF 303099) (Mesorhizobium loti (strain MAFF 303099)) protein is FMN-dependent NADH:quinone oxidoreductase.